Consider the following 424-residue polypeptide: GTPase Obg (424 aa).

Positions 1 to 158 (MFIDTAKIFV…RWIKLELKLL (158 aa)) constitute an Obg domain. One can recognise an OBG-type G domain in the interval 159-331 (ADVGLIGFPN…LMKEAARLLS (173 aa)). GTP is bound by residues 165-172 (GFPNVGKS), 190-194 (FTTLK), 212-215 (DIPG), 282-285 (NKSD), and 312-314 (SAA). Residues Ser-172 and Thr-192 each contribute to the Mg(2+) site. The OCT domain occupies 345-424 (RFIEEEKRFT…LNDFEFDFLL (80 aa)).

This sequence belongs to the TRAFAC class OBG-HflX-like GTPase superfamily. OBG GTPase family. In terms of assembly, monomer. It depends on Mg(2+) as a cofactor.

It localises to the cytoplasm. Its function is as follows. An essential GTPase which binds GTP, GDP and possibly (p)ppGpp with moderate affinity, with high nucleotide exchange rates and a fairly low GTP hydrolysis rate. Plays a role in control of the cell cycle, stress response, ribosome biogenesis and in those bacteria that undergo differentiation, in morphogenesis control. This Clostridium botulinum (strain Okra / Type B1) protein is GTPase Obg.